The sequence spans 127 residues: Large ribosomal subunit protein bL12 (127 aa).

It belongs to the bacterial ribosomal protein bL12 family. In terms of assembly, homodimer. Part of the ribosomal stalk of the 50S ribosomal subunit. Forms a multimeric L10(L12)X complex, where L10 forms an elongated spine to which 2 to 4 L12 dimers bind in a sequential fashion. Binds GTP-bound translation factors.

Its function is as follows. Forms part of the ribosomal stalk which helps the ribosome interact with GTP-bound translation factors. Is thus essential for accurate translation. In Streptococcus thermophilus (strain CNRZ 1066), this protein is Large ribosomal subunit protein bL12.